The sequence spans 441 residues: Gluconate 2-dehydrogenase cytochrome c subunit (441 aa).

Residues 1-19 (MMKSILALVLGTLSFAALA) form the signal peptide. 3 consecutive Cytochrome c domains span residues 26 to 129 (ALVK…MHGV), 173 to 289 (PVLA…KSLG), and 312 to 403 (DDSQ…RGSW). Positions 40, 43, 44, 188, 191, 192, 325, 328, and 329 each coordinate heme c.

Heterotrimer. FAD is required as a cofactor. Binds 3 heme c groupd covalently per subunit.

It is found in the cell membrane. The enzyme catalyses D-gluconate + A = 2-dehydro-D-gluconate + AH2. Its function is as follows. Part of the heterotrimer that catalyzes the conversion of D-gluconate to 2-dehydro-D-gluconate. The chain is Gluconate 2-dehydrogenase cytochrome c subunit from Pantoea cypripedii (Pectobacterium cypripedii).